The sequence spans 302 residues: tRNA dimethylallyltransferase (302 aa).

Residue 7 to 14 (GPTASGKS) coordinates ATP. 9-14 (TASGKS) serves as a coordination point for substrate. Interaction with substrate tRNA regions lie at residues 32 to 35 (DSMQ) and 156 to 160 (QRILR).

This sequence belongs to the IPP transferase family. In terms of assembly, monomer. The cofactor is Mg(2+).

It carries out the reaction adenosine(37) in tRNA + dimethylallyl diphosphate = N(6)-dimethylallyladenosine(37) in tRNA + diphosphate. In terms of biological role, catalyzes the transfer of a dimethylallyl group onto the adenine at position 37 in tRNAs that read codons beginning with uridine, leading to the formation of N6-(dimethylallyl)adenosine (i(6)A). In Beijerinckia indica subsp. indica (strain ATCC 9039 / DSM 1715 / NCIMB 8712), this protein is tRNA dimethylallyltransferase.